Consider the following 290-residue polypeptide: Diaminopimelate epimerase (290 aa).

Residues Asn14 and Asn67 each contribute to the substrate site. The active-site Proton donor is Cys76. Residues 77–78, Asn166, Asn199, and 217–218 each bind substrate; these read GN and ER. Residue Cys226 is the Proton acceptor of the active site. A substrate-binding site is contributed by 227 to 228; it reads GT.

The protein belongs to the diaminopimelate epimerase family. In terms of assembly, homodimer.

It is found in the cytoplasm. The enzyme catalyses (2S,6S)-2,6-diaminopimelate = meso-2,6-diaminopimelate. It participates in amino-acid biosynthesis; L-lysine biosynthesis via DAP pathway; DL-2,6-diaminopimelate from LL-2,6-diaminopimelate: step 1/1. Catalyzes the stereoinversion of LL-2,6-diaminopimelate (L,L-DAP) to meso-diaminopimelate (meso-DAP), a precursor of L-lysine and an essential component of the bacterial peptidoglycan. The protein is Diaminopimelate epimerase of Geobacillus kaustophilus (strain HTA426).